Consider the following 286-residue polypeptide: Shikimate dehydrogenase (NADP(+)) (286 aa).

Shikimate is bound by residues 22–24 (SRS) and Thr-71. Catalysis depends on Lys-75, which acts as the Proton acceptor. Glu-87 contacts NADP(+). Shikimate-binding residues include Asn-96 and Asp-111. Residues 136–140 (GAGGA), 160–165 (NRTPER), and Ile-225 each bind NADP(+). Tyr-227 lines the shikimate pocket. Residue Gly-248 participates in NADP(+) binding.

This sequence belongs to the shikimate dehydrogenase family. As to quaternary structure, homodimer.

The catalysed reaction is shikimate + NADP(+) = 3-dehydroshikimate + NADPH + H(+). It participates in metabolic intermediate biosynthesis; chorismate biosynthesis; chorismate from D-erythrose 4-phosphate and phosphoenolpyruvate: step 4/7. Functionally, involved in the biosynthesis of the chorismate, which leads to the biosynthesis of aromatic amino acids. Catalyzes the reversible NADPH linked reduction of 3-dehydroshikimate (DHSA) to yield shikimate (SA). This chain is Shikimate dehydrogenase (NADP(+)), found in Sinorhizobium medicae (strain WSM419) (Ensifer medicae).